The chain runs to 49 residues: Small, acid-soluble spore protein O (49 aa).

Residues 1-49 (MGKRKANHTISGMNAASAQGQGTGYNEEFANEPFTPAERQNNKKRKKNQ) form a disordered region. Residues 8–20 (HTISGMNAASAQG) show a composition bias toward polar residues.

This sequence belongs to the SspO family.

The protein resides in the spore core. The protein is Small, acid-soluble spore protein O of Bacillus cereus (strain ATCC 14579 / DSM 31 / CCUG 7414 / JCM 2152 / NBRC 15305 / NCIMB 9373 / NCTC 2599 / NRRL B-3711).